The sequence spans 458 residues: Cysteine--tRNA ligase (458 aa).

Cysteine 29 is a binding site for Zn(2+). The 'HIGH' region motif lies at 31–41 (MTVYDLCHLGH). Residues cysteine 213, histidine 238, and glutamate 242 each contribute to the Zn(2+) site. A 'KMSKS' region motif is present at residues 270-274 (KMSKS). Lysine 273 provides a ligand contact to ATP.

It belongs to the class-I aminoacyl-tRNA synthetase family. As to quaternary structure, monomer. The cofactor is Zn(2+).

Its subcellular location is the cytoplasm. It carries out the reaction tRNA(Cys) + L-cysteine + ATP = L-cysteinyl-tRNA(Cys) + AMP + diphosphate. The polypeptide is Cysteine--tRNA ligase (Acidovorax ebreus (strain TPSY) (Diaphorobacter sp. (strain TPSY))).